We begin with the raw amino-acid sequence, 297 residues long: Acetylglutamate kinase (297 aa).

Residues 68–69, Arg-90, and Asn-189 each bind substrate; that span reads GG.

It belongs to the acetylglutamate kinase family. ArgB subfamily.

The protein localises to the cytoplasm. The catalysed reaction is N-acetyl-L-glutamate + ATP = N-acetyl-L-glutamyl 5-phosphate + ADP. It participates in amino-acid biosynthesis; L-arginine biosynthesis; N(2)-acetyl-L-ornithine from L-glutamate: step 2/4. In terms of biological role, catalyzes the ATP-dependent phosphorylation of N-acetyl-L-glutamate. This Akkermansia muciniphila (strain ATCC BAA-835 / DSM 22959 / JCM 33894 / BCRC 81048 / CCUG 64013 / CIP 107961 / Muc) protein is Acetylglutamate kinase.